We begin with the raw amino-acid sequence, 965 residues long: Meiosis-specific coiled-coil domain-containing protein MEIOC (965 aa).

2 disordered regions span residues 1–22 (MEVS…EGPE) and 946–965 (VHES…TSKH). Residues 949 to 965 (SINSSNPMNQRGETSKH) show a composition bias toward polar residues.

Interacts with YTHDC2; binds transcripts that regulate the mitotic cell cycle inhibiting progression into metaphase, thereby allowing meiotic prophase to proceed normally. Interacts with RBM46. In terms of tissue distribution, expressed specifically in fetal ovary and postnatal and adult testes (at protein level). In adult testis expressed in spermatocytes, beginning in preleptotene and extending through most stages of meiotic prophase I, including leptotene, zygotene, and pachytene.

The protein localises to the cytoplasm. It localises to the nucleus. In terms of biological role, is required for meiosis completion in both male and female germ cells. Confers stability to numerous meiotic mRNAs in gonads allowing proper initiation and progression into meiosis prophase I. The function may involve YTHDC2 and is independent of induction by retinoic acid (RA). Maintains an extended meiotic prophase I by properly promoting the transition from a mitotic to a meiotic cell cycle program by binding transcripts through its interaction with YTHDC2 that regulate the mitotic cell cycle. The sequence is that of Meiosis-specific coiled-coil domain-containing protein MEIOC from Mus musculus (Mouse).